We begin with the raw amino-acid sequence, 313 residues long: Olfactory receptor 5D18 (313 aa).

The Extracellular segment spans residues 1 to 26 (MLLTDRNTSGTTFTLLGFSDYPELQV). An N-linked (GlcNAc...) asparagine glycan is attached at Asn-7. The helical transmembrane segment at 27–47 (PLFLVFLAIYNVTVLGNIGLI) threads the bilayer. Residues 48 to 55 (VIIKINPK) lie on the Cytoplasmic side of the membrane. Residues 56–76 (LHTPMYFFLSQLSFVDFCYSS) form a helical membrane-spanning segment. The Extracellular segment spans residues 77–100 (IIAPKMLVNLVVKDRTISFLGCVV). Cys-98 and Cys-190 are disulfide-bonded. A helical transmembrane segment spans residues 101–121 (QFFFFCTFVVTESFLLAVMAY). Topologically, residues 122 to 140 (DRFVAICNPLLYTVNMSQK) are cytoplasmic. The chain crosses the membrane as a helical span at residues 141 to 161 (LCVLLVVGSYAWGVSCSLELT). Residues 162–197 (CSALKLCFHGFNTINHFFCEFSSLLSLSCSDTYINQ) are Extracellular-facing. The chain crosses the membrane as a helical span at residues 198 to 218 (WLLFFLATFNEISTLLIVLTS). Over 219 to 238 (YAFIVVTILKMRSVSGRRKA) the chain is Cytoplasmic. Residues 239–259 (FSTCASHLTAITIFHGTILFL) traverse the membrane as a helical segment. At 260-272 (YCVPNSKNSRHTV) the chain is on the extracellular side. Residues 273–293 (KVASVFYTVVIPMLNPLIYSL) traverse the membrane as a helical segment. The Cytoplasmic segment spans residues 294–313 (RNKDVKDTVTEILDTKVFSY).

The protein belongs to the G-protein coupled receptor 1 family.

The protein resides in the cell membrane. Its function is as follows. Odorant receptor. The protein is Olfactory receptor 5D18 (OR5D18) of Homo sapiens (Human).